Here is a 139-residue protein sequence, read N- to C-terminus: ATP synthase epsilon chain (139 aa).

This sequence belongs to the ATPase epsilon chain family. F-type ATPases have 2 components, CF(1) - the catalytic core - and CF(0) - the membrane proton channel. CF(1) has five subunits: alpha(3), beta(3), gamma(1), delta(1), epsilon(1). CF(0) has three main subunits: a, b and c.

Its subcellular location is the cell inner membrane. In terms of biological role, produces ATP from ADP in the presence of a proton gradient across the membrane. This chain is ATP synthase epsilon chain, found in Salmonella typhimurium (strain LT2 / SGSC1412 / ATCC 700720).